The following is a 160-amino-acid chain: MADDNNSNGAANPTLSILAQYTKDLSFENPGAPRSLQARDKAPTININVNVNANPLSDTDFDVVLSLNAEAKDGDKTVFHAELTYGGVFRVAGFPQEHMLPVLFIECPRMLFPFARQIIADVTRNGGFPPLMIDPIDFTQMFAQRVAEEQARAKVQAVPN.

The protein belongs to the SecB family. In terms of assembly, homotetramer, a dimer of dimers. One homotetramer interacts with 1 SecA dimer.

It is found in the cytoplasm. Its function is as follows. One of the proteins required for the normal export of preproteins out of the cell cytoplasm. It is a molecular chaperone that binds to a subset of precursor proteins, maintaining them in a translocation-competent state. It also specifically binds to its receptor SecA. This Rhizobium johnstonii (strain DSM 114642 / LMG 32736 / 3841) (Rhizobium leguminosarum bv. viciae) protein is Protein-export protein SecB.